We begin with the raw amino-acid sequence, 507 residues long: MTDDPGSGFTTVWNAVVSELNGDPKVDDGPSSDANLSAPLTPQQRAWLNLVQPLTIVEGFALLSVPSSFVQNEIERHLRAPITDALSRRLGHQIQLGVRIAPPATDEADDTTVPPSENPATTSPDTTTDNDEIDDSAAARGDNQHSWPSYFTERPRNTDSATAGVTSLNRRYTFDTFVIGASNRFAHAAALAIAEAPARAYNPLFIWGESGLGKTHLLHAAGNYAQRLFPGMRVKYVSTEEFTNDFINSLRDDRKVAFKRSYRDVDVLLVDDIQFIEGKEGIQEEFFHTFNTLHNANKQIVISSDRPPKQLATLEDRLRTRFEWGLITDVQPPELETRIAILRKKAQMERLAVPDDVLELIASSIERNIRELEGALIRVTAFASLNKTPIDKALAEIVLRDLIADANTMQISAATIMAATAEYFDTTVEELRGPGKTRALAQSRQIAMYLCRELTDLSLPKIGQAFGRDHTTVMYAQRKILSEMAERREVFDHVKELTTRIRQRSKR.

A domain I, interacts with DnaA modulators region spans residues 1–112 (MTDDPGSGFT…PATDEADDTT (112 aa)). A disordered region spans residues 99–162 (RIAPPATDEA…ERPRNTDSAT (64 aa)). Residues 113–127 (VPPSENPATTSPDTT) show a composition bias toward polar residues. Residues 113 to 166 (VPPSENPATTSPDTTTDNDEIDDSAAARGDNQHSWPSYFTERPRNTDSATAGVT) are domain II. The interval 167–383 (SLNRRYTFDT…GALIRVTAFA (217 aa)) is domain III, AAA+ region. Gly-211, Gly-213, Lys-214, and Thr-215 together coordinate ATP. A domain IV, binds dsDNA region spans residues 384–507 (SLNKTPIDKA…TTRIRQRSKR (124 aa)).

This sequence belongs to the DnaA family. As to quaternary structure, oligomerizes as a right-handed, spiral filament on DNA at oriC.

It is found in the cytoplasm. Functionally, plays an essential role in the initiation and regulation of chromosomal replication. ATP-DnaA binds to the origin of replication (oriC) to initiate formation of the DNA replication initiation complex once per cell cycle. Binds the DnaA box (a 9 base pair repeat at the origin) and separates the double-stranded (ds)DNA. Forms a right-handed helical filament on oriC DNA; dsDNA binds to the exterior of the filament while single-stranded (ss)DNA is stabiized in the filament's interior. The ATP-DnaA-oriC complex binds and stabilizes one strand of the AT-rich DNA unwinding element (DUE), permitting loading of DNA polymerase. After initiation quickly degrades to an ADP-DnaA complex that is not apt for DNA replication. Binds acidic phospholipids. The polypeptide is Chromosomal replication initiator protein DnaA (Mycobacterium bovis (strain BCG / Tokyo 172 / ATCC 35737 / TMC 1019)).